The primary structure comprises 160 residues: Large ribosomal subunit protein uL22c (160 aa).

Belongs to the universal ribosomal protein uL22 family. Part of the 50S ribosomal subunit.

Its subcellular location is the plastid. It localises to the chloroplast. Functionally, this protein binds specifically to 23S rRNA. In terms of biological role, the globular domain of the protein is located near the polypeptide exit tunnel on the outside of the subunit, while an extended beta-hairpin is found that lines the wall of the exit tunnel in the center of the 70S ribosome. The chain is Large ribosomal subunit protein uL22c (rpl22) from Crucihimalaya wallichii (Rock-cress).